The chain runs to 390 residues: UPF0229 protein Cbei_0567 (390 aa).

Positions S77–D108 are disordered. Over residues G89–G103 the composition is skewed to low complexity.

This sequence belongs to the UPF0229 family.

The polypeptide is UPF0229 protein Cbei_0567 (Clostridium beijerinckii (strain ATCC 51743 / NCIMB 8052) (Clostridium acetobutylicum)).